Reading from the N-terminus, the 135-residue chain is Small ribosomal subunit protein bS16 (135 aa).

The disordered stretch occupies residues 94-135; sequence IGTEMETWQQRNDSRLKRGLDRKAIRRKRKKEAEAKEKESAG. 2 stretches are compositionally biased toward basic and acidic residues: residues 105–116 and 124–135; these read NDSRLKRGLDRK and KEAEAKEKESAG.

This sequence belongs to the bacterial ribosomal protein bS16 family.

This is Small ribosomal subunit protein bS16 from Chloroherpeton thalassium (strain ATCC 35110 / GB-78).